The sequence spans 395 residues: D-alanine--D-alanine ligase (395 aa).

In terms of domain architecture, ATP-grasp spans 172–391; sequence KVVLDAAGIP…YTELITRLIE (220 aa). 204 to 266 is a binding site for ATP; sequence DAGLTYPLFV…EQGIDGREIE (63 aa). Aspartate 345, glutamate 358, and asparagine 360 together coordinate Mg(2+).

The protein belongs to the D-alanine--D-alanine ligase family. The cofactor is Mg(2+). It depends on Mn(2+) as a cofactor.

It localises to the cytoplasm. It catalyses the reaction 2 D-alanine + ATP = D-alanyl-D-alanine + ADP + phosphate + H(+). Its pathway is cell wall biogenesis; peptidoglycan biosynthesis. Cell wall formation. This Bifidobacterium longum (strain DJO10A) protein is D-alanine--D-alanine ligase.